The sequence spans 249 residues: Exosome complex component Rrp41 (249 aa).

Belongs to the RNase PH family. Rrp41 subfamily. As to quaternary structure, component of the archaeal exosome complex. Forms a hexameric ring-like arrangement composed of 3 Rrp41-Rrp42 heterodimers. The hexameric ring associates with a trimer of Rrp4 and/or Csl4 subunits.

The protein localises to the cytoplasm. Functionally, catalytic component of the exosome, which is a complex involved in RNA degradation. Has 3'-&gt;5' exoribonuclease activity. Can also synthesize heteromeric RNA-tails. In Pyrococcus horikoshii (strain ATCC 700860 / DSM 12428 / JCM 9974 / NBRC 100139 / OT-3), this protein is Exosome complex component Rrp41.